Here is a 367-residue protein sequence, read N- to C-terminus: 3-dehydroquinate synthase (367 aa).

NAD(+) contacts are provided by residues 69–74 (DGESHK), 103–107 (GVIGD), 127–128 (TT), Lys140, Lys149, and 167–170 (TLAT). 3 residues coordinate Zn(2+): Glu182, His245, and His262.

The protein belongs to the sugar phosphate cyclases superfamily. Dehydroquinate synthase family. Requires Co(2+) as cofactor. The cofactor is Zn(2+). It depends on NAD(+) as a cofactor.

It localises to the cytoplasm. It catalyses the reaction 7-phospho-2-dehydro-3-deoxy-D-arabino-heptonate = 3-dehydroquinate + phosphate. It participates in metabolic intermediate biosynthesis; chorismate biosynthesis; chorismate from D-erythrose 4-phosphate and phosphoenolpyruvate: step 2/7. Functionally, catalyzes the conversion of 3-deoxy-D-arabino-heptulosonate 7-phosphate (DAHP) to dehydroquinate (DHQ). This is 3-dehydroquinate synthase from Stutzerimonas stutzeri (strain A1501) (Pseudomonas stutzeri).